Consider the following 391-residue polypeptide: Heme A synthase (391 aa).

The next 8 helical transmembrane spans lie at 37-57 (IRLW…VGGL), 121-141 (RQLG…FLVA), 152-172 (LLAL…MVAS), 186-206 (LAVH…QALL), 229-249 (TTVL…VAGI), 298-318 (FLHR…WIFG), 332-352 (LLAL…LSAA), and 354-374 (WQVA…ILHA). Heme is bound at residue His300. Residue His360 participates in heme binding.

Belongs to the COX15/CtaA family. Type 2 subfamily. As to quaternary structure, interacts with CtaB. Heme b is required as a cofactor.

The protein localises to the cell membrane. It catalyses the reaction Fe(II)-heme o + 2 A + H2O = Fe(II)-heme a + 2 AH2. Its pathway is porphyrin-containing compound metabolism; heme A biosynthesis; heme A from heme O: step 1/1. Its function is as follows. Catalyzes the conversion of heme O to heme A by two successive hydroxylations of the methyl group at C8. The first hydroxylation forms heme I, the second hydroxylation results in an unstable dihydroxymethyl group, which spontaneously dehydrates, resulting in the formyl group of heme A. This is Heme A synthase from Cereibacter sphaeroides (strain ATCC 17025 / ATH 2.4.3) (Rhodobacter sphaeroides).